A 931-amino-acid chain; its full sequence is Bifunctional uridylyltransferase/uridylyl-removing enzyme (931 aa).

The segment at 1-383 is uridylyltransferase; sequence MDSVTPNSRP…KTGNSWRRVP (383 aa). The tract at residues 384–739 is uridylyl-removing; the sequence is ESDDFIVDNN…VGFDPARGVT (356 aa). Positions 499-622 constitute an HD domain; that stretch reads VDEHLIRCIG…VQSVEQMKLL (124 aa). ACT domains follow at residues 740–822 and 851–931; these read ELTI…AVAR and VIEV…QPAA.

The protein belongs to the GlnD family. The cofactor is Mg(2+).

It carries out the reaction [protein-PII]-L-tyrosine + UTP = [protein-PII]-uridylyl-L-tyrosine + diphosphate. The enzyme catalyses [protein-PII]-uridylyl-L-tyrosine + H2O = [protein-PII]-L-tyrosine + UMP + H(+). With respect to regulation, uridylyltransferase (UTase) activity is inhibited by glutamine, while glutamine activates uridylyl-removing (UR) activity. In terms of biological role, modifies, by uridylylation and deuridylylation, the PII regulatory proteins (GlnB and homologs), in response to the nitrogen status of the cell that GlnD senses through the glutamine level. Under low glutamine levels, catalyzes the conversion of the PII proteins and UTP to PII-UMP and PPi, while under higher glutamine levels, GlnD hydrolyzes PII-UMP to PII and UMP (deuridylylation). Thus, controls uridylylation state and activity of the PII proteins, and plays an important role in the regulation of nitrogen fixation and metabolism. The polypeptide is Bifunctional uridylyltransferase/uridylyl-removing enzyme (Bradyrhizobium sp. (strain BTAi1 / ATCC BAA-1182)).